A 357-amino-acid chain; its full sequence is Phosphoribosylformylglycinamidine cyclo-ligase (357 aa).

Belongs to the AIR synthase family.

It is found in the cytoplasm. It catalyses the reaction 2-formamido-N(1)-(5-O-phospho-beta-D-ribosyl)acetamidine + ATP = 5-amino-1-(5-phospho-beta-D-ribosyl)imidazole + ADP + phosphate + H(+). Its pathway is purine metabolism; IMP biosynthesis via de novo pathway; 5-amino-1-(5-phospho-D-ribosyl)imidazole from N(2)-formyl-N(1)-(5-phospho-D-ribosyl)glycinamide: step 2/2. This is Phosphoribosylformylglycinamidine cyclo-ligase from Rhizobium leguminosarum.